Consider the following 299-residue polypeptide: Tyrosine recombinase XerC (299 aa).

One can recognise a Core-binding (CB) domain in the interval 1–85; that stretch reads MEQHLDAYCM…AVRGFYKYLN (85 aa). The Tyr recombinase domain maps to 106 to 285; that stretch reads RLPKTLDTDR…DFQHLATVYD (180 aa). Residues R146, K170, H237, R240, and H263 contribute to the active site. Y272 functions as the O-(3'-phospho-DNA)-tyrosine intermediate in the catalytic mechanism.

The protein belongs to the 'phage' integrase family. XerC subfamily. Forms a cyclic heterotetrameric complex composed of two molecules of XerC and two molecules of XerD.

It localises to the cytoplasm. In terms of biological role, site-specific tyrosine recombinase, which acts by catalyzing the cutting and rejoining of the recombining DNA molecules. The XerC-XerD complex is essential to convert dimers of the bacterial chromosome into monomers to permit their segregation at cell division. It also contributes to the segregational stability of plasmids. This Pseudomonas savastanoi pv. phaseolicola (strain 1448A / Race 6) (Pseudomonas syringae pv. phaseolicola (strain 1448A / Race 6)) protein is Tyrosine recombinase XerC.